A 294-amino-acid polypeptide reads, in one-letter code: tRNA pseudouridine synthase B (294 aa).

Aspartate 38 (nucleophile) is an active-site residue.

The protein belongs to the pseudouridine synthase TruB family. Type 1 subfamily.

The catalysed reaction is uridine(55) in tRNA = pseudouridine(55) in tRNA. Functionally, responsible for synthesis of pseudouridine from uracil-55 in the psi GC loop of transfer RNAs. This Clostridium perfringens (strain ATCC 13124 / DSM 756 / JCM 1290 / NCIMB 6125 / NCTC 8237 / Type A) protein is tRNA pseudouridine synthase B.